A 659-amino-acid polypeptide reads, in one-letter code: Threonine--tRNA ligase (659 aa).

Positions 1–61 constitute a TGS domain; the sequence is MSAVPELRIT…ADGDVVEEIR (61 aa). Positions 260–555 are catalytic; that stretch reads DHRKLGVELD…LLEHYAGAFP (296 aa). Zn(2+) is bound by residues cysteine 353, histidine 404, and histidine 532.

The protein belongs to the class-II aminoacyl-tRNA synthetase family. As to quaternary structure, homodimer. Requires Zn(2+) as cofactor.

It is found in the cytoplasm. The catalysed reaction is tRNA(Thr) + L-threonine + ATP = L-threonyl-tRNA(Thr) + AMP + diphosphate + H(+). Its function is as follows. Catalyzes the attachment of threonine to tRNA(Thr) in a two-step reaction: L-threonine is first activated by ATP to form Thr-AMP and then transferred to the acceptor end of tRNA(Thr). Also edits incorrectly charged L-seryl-tRNA(Thr). This Thermobifida fusca (strain YX) protein is Threonine--tRNA ligase.